We begin with the raw amino-acid sequence, 71 residues long: Disintegrin viridin (71 aa).

The Disintegrin domain maps to 1 to 71 (AGEECDCGSP…SADCPRNRFH (71 aa)). 6 cysteine pairs are disulfide-bonded: cysteine 5/cysteine 20, cysteine 7/cysteine 15, cysteine 14/cysteine 37, cysteine 28/cysteine 34, cysteine 33/cysteine 58, and cysteine 46/cysteine 65. The short motif at 50–52 (RGD) is the Cell attachment site element. The disordered stretch occupies residues 50–71 (RGDNPDDRCTGQSADCPRNRFH).

It belongs to the venom metalloproteinase (M12B) family. P-II subfamily. P-IIa sub-subfamily. In terms of assembly, monomer (disintegrin). As to expression, expressed by the venom gland.

Its subcellular location is the secreted. In terms of biological role, inhibits fibrinogen interaction with platelets. Acts by binding to alpha-IIb/beta-3 (ITGA2B/ITGB3) on the platelet surface and inhibits aggregation induced by ADP, thrombin, platelet-activating factor and collagen. This Crotalus viridis viridis (Prairie rattlesnake) protein is Disintegrin viridin.